The following is a 429-amino-acid chain: Glutamate-1-semialdehyde 2,1-aminomutase 1 (429 aa).

An N6-(pyridoxal phosphate)lysine modification is found at K267.

It belongs to the class-III pyridoxal-phosphate-dependent aminotransferase family. HemL subfamily. In terms of assembly, homodimer. It depends on pyridoxal 5'-phosphate as a cofactor.

It localises to the cytoplasm. The catalysed reaction is (S)-4-amino-5-oxopentanoate = 5-aminolevulinate. It participates in porphyrin-containing compound metabolism; protoporphyrin-IX biosynthesis; 5-aminolevulinate from L-glutamyl-tRNA(Glu): step 2/2. In Staphylococcus carnosus (strain TM300), this protein is Glutamate-1-semialdehyde 2,1-aminomutase 1.